The primary structure comprises 137 residues: Major seminal plasma glycoprotein PSP-II (137 aa).

A signal peptide spans 1 to 21 (MKLGTAIPWALLLSTATLVST). 2 cysteine pairs are disulfide-bonded: cysteine 30–cysteine 51 and cysteine 74–cysteine 95. A CUB domain is found at 30–131 (CGRVIKDTSG…SPFLIYFYGS (102 aa)). Residue asparagine 119 is glycosylated (N-linked (GlcNAc...) (complex) asparagine).

In terms of assembly, monomer or heterodimer with PSP-I (depending on the type of glycosylation of PSP-I). As to expression, seminal plasma or sperm.

The protein resides in the secreted. This Sus scrofa (Pig) protein is Major seminal plasma glycoprotein PSP-II.